A 261-amino-acid polypeptide reads, in one-letter code: Undecaprenyl-diphosphatase (261 aa).

Transmembrane regions (helical) follow at residues 38–58 (RSDF…TFVF), 75–95 (RDYV…GLAV), 106–126 (IQPI…AESV), 136–156 (VTWS…VFPG), 181–201 (FSFL…CFEL), 217–237 (VAFV…LGYI), and 241–261 (SFAP…TWLT).

It belongs to the UppP family.

It is found in the cell inner membrane. The catalysed reaction is di-trans,octa-cis-undecaprenyl diphosphate + H2O = di-trans,octa-cis-undecaprenyl phosphate + phosphate + H(+). Functionally, catalyzes the dephosphorylation of undecaprenyl diphosphate (UPP). Confers resistance to bacitracin. The sequence is that of Undecaprenyl-diphosphatase from Xylella fastidiosa (strain 9a5c).